A 189-amino-acid chain; its full sequence is Density-regulated protein homolog (189 aa).

The SUI1 domain occupies 105-172 (ICVSRAARGK…DLFDVIPEKW (68 aa)).

Belongs to the DENR family. In terms of assembly, interacts with MCTS1.

Regulates translation as part of a complex with MCTS1. Specifically required for translational re-initiation in mRNAs containing upstream open reading frames (uORFs). Not required for standard translational initiation. Regulates expression of a subset of gene products including mbc, InR and EcR. The chain is Density-regulated protein homolog from Drosophila melanogaster (Fruit fly).